A 515-amino-acid chain; its full sequence is 3,4-dehydroadipyl-CoA semialdehyde dehydrogenase (515 aa).

Active-site residues include E255 and C294. The tract at residues 470–515 (VMPTCLHGGPRARRRRRGVGRSARAGDVSPPLRRAGRPRGAGSPVA) is disordered. A compositionally biased stretch (basic residues) spans 479 to 488 (PRARRRRRGV). Residues 489–515 (GRSARAGDVSPPLRRAGRPRGAGSPVA) are compositionally biased toward low complexity.

It belongs to the aldehyde dehydrogenase family. In terms of assembly, homodimer.

It carries out the reaction (3Z)-6-oxohex-3-enoyl-CoA + NADP(+) + H2O = cis-3,4-dehydroadipyl-CoA + NADPH + 2 H(+). Its function is as follows. Catalyzes the NADP-dependent oxidation of 3,4-dehydroadipyl-CoA semialdehyde to form cis-3,4-dehydroadipyl-CoA. This Aromatoleum evansii (Azoarcus evansii) protein is 3,4-dehydroadipyl-CoA semialdehyde dehydrogenase (boxD).